Reading from the N-terminus, the 153-residue chain is Aspartate carbamoyltransferase regulatory chain (153 aa).

The Zn(2+) site is built by Cys108, Cys113, Cys137, and Cys140.

It belongs to the PyrI family. In terms of assembly, contains catalytic and regulatory chains. It depends on Zn(2+) as a cofactor.

Its function is as follows. Involved in allosteric regulation of aspartate carbamoyltransferase. This chain is Aspartate carbamoyltransferase regulatory chain, found in Methanosphaera stadtmanae (strain ATCC 43021 / DSM 3091 / JCM 11832 / MCB-3).